The sequence spans 132 residues: Small ribosomal subunit protein uS8 (132 aa).

This sequence belongs to the universal ribosomal protein uS8 family. Part of the 30S ribosomal subunit. Contacts proteins S5 and S12.

In terms of biological role, one of the primary rRNA binding proteins, it binds directly to 16S rRNA central domain where it helps coordinate assembly of the platform of the 30S subunit. The protein is Small ribosomal subunit protein uS8 of Borreliella afzelii (strain PKo) (Borrelia afzelii).